A 1668-amino-acid chain; its full sequence is Probable histone acetyltransferase HAC-like 1 (1668 aa).

Disordered regions lie at residues 1–34 (MNVG…ADGL), 459–493 (QQQP…SEQG), and 528–551 (KGGQ…HDSQ). The segment covering 11-23 (GQMSGQAPQTNQV) has biased composition (polar residues). Positions 459-469 (QQQPNSQHQQS) are enriched in low complexity. 2 stretches are compositionally biased toward polar residues: residues 470–491 (ILRS…QLSE) and 536–551 (LSSS…HDSQ). Residues 651–732 (AAGNIYYFRQ…DLQCPVCSNA (82 aa)) form a TAZ-type 1 zinc finger. The segment covering 886–899 (KETSETAPEVKNEA) has biased composition (basic and acidic residues). Residues 886 to 912 (KETSETAPEVKNEANDSTDITVSKSGK) are disordered. Over residues 900–909 (NDSTDITVSK) the composition is skewed to polar residues. A PHD-type zinc finger spans residues 1002–1079 (HFFCIPCYNE…EYTCPNCYVE (78 aa)). The CBP/p300-type HAT domain maps to 1094–1530 (VLGAKDLPRT…VLYHLHNPTA (437 aa)). Residues 1217-1219 (LDS), 1236-1237 (RT), and Trp-1292 each bind acetyl-CoA. Residues 1342–1365 (GAAEDMINQLRQEEDDRKQQKKGK) are a coiled coil. A ZZ-type zinc finger spans residues 1412 to 1475 (HLQYSCSHCC…TLHPVDIVGL (64 aa)). 8 residues coordinate Zn(2+): Cys-1417, Cys-1420, Cys-1432, Cys-1435, Cys-1441, Cys-1444, His-1457, and His-1465. The TAZ-type 2 zinc-finger motif lies at 1553 to 1634 (EVCPDFDLRK…GCNVPRCRDL (82 aa)). Residues 1630–1650 (RCRDLKEHLRRLQQQSDSRRR) adopt a coiled-coil conformation.

It is found in the nucleus. It catalyses the reaction L-lysyl-[protein] + acetyl-CoA = N(6)-acetyl-L-lysyl-[protein] + CoA + H(+). In terms of biological role, acetyltransferase enzyme. Acetylates histones, giving a specific tag for transcriptional activation. The sequence is that of Probable histone acetyltransferase HAC-like 1 from Oryza sativa subsp. japonica (Rice).